Reading from the N-terminus, the 103-residue chain is Large ribosomal subunit protein bL21 (103 aa).

It belongs to the bacterial ribosomal protein bL21 family. Part of the 50S ribosomal subunit. Contacts protein L20.

This protein binds to 23S rRNA in the presence of protein L20. The polypeptide is Large ribosomal subunit protein bL21 (Desulforudis audaxviator (strain MP104C)).